A 266-amino-acid chain; its full sequence is MYQVVASDLDGTLLSPDHTLSPYAKEPLKLLTARGINFVFATGRHHVDVGQIRDNLEIKSYMITSNGARVHDLDGNLIFAHNLDRDIASDLFGVVNDNPDIITNVYRDDEWFMNRHRPEEMRFFKEAVFKYALYEPGLLEPEGVSKVFFTCDSHEQLLPLEQAINARWGDRVNVSFSTLTCLEVMAGGVSKGHALEAVAKKLGYSLKDCIAFGDGMNDAEMLSMAGKGCIMGSAHQRLKDLHPELEVIGTNADDAVPHYLRKLYLS.

D8 functions as the Nucleophile in the catalytic mechanism. D8 lines the Mg(2+) pocket. L9 contacts phosphate. D10 provides a ligand contact to Mg(2+). Phosphate-binding positions include 42–43 (TG) and K191. D214 contributes to the Mg(2+) binding site. Residue N217 participates in phosphate binding.

The protein belongs to the HAD-like hydrolase superfamily. Cof family. It depends on Mg(2+) as a cofactor. Requires Mn(2+) as cofactor. Co(2+) is required as a cofactor. Zn(2+) serves as cofactor.

It carries out the reaction pyridoxal 5'-phosphate + H2O = pyridoxal + phosphate. It catalyses the reaction sugar phosphate + H2O = sugar + phosphate.. Its function is as follows. Catalyzes the dephosphorylation of pyridoxal-phosphate (PLP) and sugar phosphate. The protein is Pyridoxal phosphate phosphatase YigL (yigL) of Escherichia coli O157:H7.